Reading from the N-terminus, the 304-residue chain is Aspartate carbamoyltransferase catalytic subunit (304 aa).

Residues arginine 49 and threonine 50 each coordinate carbamoyl phosphate. Lysine 77 lines the L-aspartate pocket. Carbamoyl phosphate is bound by residues arginine 99, histidine 127, and glutamine 130. Arginine 160 and arginine 211 together coordinate L-aspartate. Positions 252 and 253 each coordinate carbamoyl phosphate.

Belongs to the aspartate/ornithine carbamoyltransferase superfamily. ATCase family. In terms of assembly, heterododecamer (2C3:3R2) of six catalytic PyrB chains organized as two trimers (C3), and six regulatory PyrI chains organized as three dimers (R2).

The enzyme catalyses carbamoyl phosphate + L-aspartate = N-carbamoyl-L-aspartate + phosphate + H(+). Its pathway is pyrimidine metabolism; UMP biosynthesis via de novo pathway; (S)-dihydroorotate from bicarbonate: step 2/3. In terms of biological role, catalyzes the condensation of carbamoyl phosphate and aspartate to form carbamoyl aspartate and inorganic phosphate, the committed step in the de novo pyrimidine nucleotide biosynthesis pathway. This is Aspartate carbamoyltransferase catalytic subunit from Bacillus cereus (strain ZK / E33L).